A 222-amino-acid polypeptide reads, in one-letter code: MPPLALLKLMNLISPALPVGAFAYSQGLEWAIDHGGIDTPEKIHDWLQGVISQGLGKTDLPVLFKLLQAWGANDHEQINSWNAWLLAARETQELLDEDRHVGKALAKLLRDLNVPGAEPWLERPASLLTLWTLACAHWDIDAESAALGFLWSWLENQIAVAGKTLPLAQTAAQRILQRLMPVLTETVAAATQIKEEDFGASLPGWAMACANHETQYSRLFRS.

This sequence belongs to the UreF family. As to quaternary structure, ureD, UreF and UreG form a complex that acts as a GTP-hydrolysis-dependent molecular chaperone, activating the urease apoprotein by helping to assemble the nickel containing metallocenter of UreC. The UreE protein probably delivers the nickel.

It localises to the cytoplasm. Functionally, required for maturation of urease via the functional incorporation of the urease nickel metallocenter. In Hahella chejuensis (strain KCTC 2396), this protein is Urease accessory protein UreF.